Reading from the N-terminus, the 353-residue chain is Chemerin-like receptor 2 (353 aa).

The Extracellular portion of the chain corresponds to 1 to 41 (MEVSREMLFEELDNYSYALEYYSQEPDAEENVYPGIVHWIS). N-linked (GlcNAc...) asparagine glycosylation is present at asparagine 14. Residues 42–62 (LLLYALAFVLGIPGNAIVIWF) form a helical membrane-spanning segment. Residues 63–73 (MGFKWKKTVTT) are Cytoplasmic-facing. The helical transmembrane segment at 74–94 (LWFLNLAIADFVFVLFLPLYI) threads the bilayer. Residues 95–112 (SYVALSFHWPFGRWLCKL) lie on the Extracellular side of the membrane. The cysteines at positions 110 and 187 are disulfide-linked. The chain crosses the membrane as a helical span at residues 113 to 133 (NSFIAQLNMFSSVFFLTVISL). Topologically, residues 134–154 (DRYIHLIHPGLSHPHRTLKNS) are cytoplasmic. Residues 155-175 (LLVVLFVWLLASLLGGPTLYF) form a helical membrane-spanning segment. The Extracellular segment spans residues 176-210 (RDTVEVNNRIICYNNFQEYELTLMRHHVLTWVKFL). A helical membrane pass occupies residues 211 to 231 (FGYLLPLLTMSSCYLCLIFKT). The Cytoplasmic portion of the chain corresponds to 232-247 (KKQNILISSKHLWMIL). The chain crosses the membrane as a helical span at residues 248–268 (SVVIAFMVCWTPFHLFSIWEL). Over 269 to 286 (SIHHNSSFQNVLQGGIPL) the chain is Extracellular. Residues 287-307 (STGLAFLNSCLNPILYVLISK) form a helical membrane-spanning segment. Residues 308–353 (KFQARFRASVAEVLKRSLWEASCSGTVSEQLRSAETKSLSLLETAQ) are Cytoplasmic-facing.

Belongs to the chemokine-like receptor (CMKLR) family.

The protein resides in the cell membrane. Functionally, receptor for chemoattractant adipokine chemerin/RARRES2 suggesting a role for this receptor in the regulation of inflammation and energy homesotasis. Signals mainly via beta-arrestin pathway. Binding of RARRES2 activates weakly G proteins, calcium mobilization and MAPK1/MAPK3 (ERK1/2) phosphorylation too. Acts also as a receptor for TAFA1, mediates its effects on neuronal stem-cell proliferation and differentiation via the activation of ROCK/ERK and ROCK/STAT3 signaling pathway. In Rattus norvegicus (Rat), this protein is Chemerin-like receptor 2 (Cmklr2).